A 132-amino-acid polypeptide reads, in one-letter code: EF-hand calcium-binding domain-containing protein 10 (132 aa).

2 consecutive EF-hand domains span residues 64–99 and 120–132; these read MDNS…LGLC and EMNK…WSMF.

The protein is EF-hand calcium-binding domain-containing protein 10 (Efcab10) of Mus musculus (Mouse).